The primary structure comprises 614 residues: Bifunctional enzyme CysN/CysC (614 aa).

The interval 1–441 is sulfate adenylyltransferase; sequence MTTLLRLATA…SLVTAQDRPP (441 aa). Positions 2–217 constitute a tr-type G domain; the sequence is TTLLRLATAG…DVYIAGDRNM (216 aa). Residues 11–18 form a G1 region; sequence GSVDDGKS. 11–18 is a binding site for GTP; the sequence is GSVDDGKS. A G2 region spans residues 67 to 71; sequence GITID. Residues 88–91 are G3; the sequence is DTPG. Residues 88-92 and 143-146 contribute to the GTP site; these read DTPGH and NKMD. Residues 143-146 are G4; it reads NKMD. Residues 180-182 form a G5 region; it reads SAL. The tract at residues 442-614 is adenylyl-sulfate kinase; sequence RGKTVWFTGL…EVIDLLESSS (173 aa). Position 450-457 (450-457) interacts with ATP; sequence GLSGSGKS. Ser-524 serves as the catalytic Phosphoserine intermediate. A disordered region spans residues 578–597; it reads GIDSPYQRPKNPDLRLTPDR. Residues 587–597 are compositionally biased toward basic and acidic residues; that stretch reads KNPDLRLTPDR.

The protein in the C-terminal section; belongs to the APS kinase family. It in the N-terminal section; belongs to the TRAFAC class translation factor GTPase superfamily. Classic translation factor GTPase family. CysN/NodQ subfamily. As to quaternary structure, heterodimer composed of CysD, the smaller subunit, and CysNC.

It carries out the reaction sulfate + ATP + H(+) = adenosine 5'-phosphosulfate + diphosphate. The catalysed reaction is adenosine 5'-phosphosulfate + ATP = 3'-phosphoadenylyl sulfate + ADP + H(+). It participates in sulfur metabolism; hydrogen sulfide biosynthesis; sulfite from sulfate: step 1/3. The protein operates within sulfur metabolism; hydrogen sulfide biosynthesis; sulfite from sulfate: step 2/3. Functionally, with CysD forms the ATP sulfurylase (ATPS) that catalyzes the adenylation of sulfate producing adenosine 5'-phosphosulfate (APS) and diphosphate, the first enzymatic step in sulfur assimilation pathway. APS synthesis involves the formation of a high-energy phosphoric-sulfuric acid anhydride bond driven by GTP hydrolysis by CysN coupled to ATP hydrolysis by CysD. In terms of biological role, APS kinase catalyzes the synthesis of activated sulfate. In Mycobacterium tuberculosis (strain CDC 1551 / Oshkosh), this protein is Bifunctional enzyme CysN/CysC (cysNC).